A 500-amino-acid chain; its full sequence is Maturase K (500 aa).

This sequence belongs to the intron maturase 2 family. MatK subfamily.

The protein localises to the plastid. Its subcellular location is the chloroplast. In terms of biological role, usually encoded in the trnK tRNA gene intron. Probably assists in splicing its own and other chloroplast group II introns. The chain is Maturase K from Proboscidea louisianica (Louisiana Devil's-claw).